The following is a 209-amino-acid chain: Shikimate kinase (209 aa).

47 to 52 (GAGKTT) is an ATP binding site. T51 contributes to the Mg(2+) binding site. Residues D69, R93, and G115 each coordinate substrate. R153 serves as a coordination point for ATP. R172 provides a ligand contact to substrate.

This sequence belongs to the shikimate kinase family. Monomer. The cofactor is Mg(2+).

The protein resides in the cytoplasm. It catalyses the reaction shikimate + ATP = 3-phosphoshikimate + ADP + H(+). It functions in the pathway metabolic intermediate biosynthesis; chorismate biosynthesis; chorismate from D-erythrose 4-phosphate and phosphoenolpyruvate: step 5/7. Its function is as follows. Catalyzes the specific phosphorylation of the 3-hydroxyl group of shikimic acid using ATP as a cosubstrate. The sequence is that of Shikimate kinase from Bordetella avium (strain 197N).